Consider the following 211-residue polypeptide: ATP phosphoribosyltransferase (211 aa).

The protein belongs to the ATP phosphoribosyltransferase family. Short subfamily. As to quaternary structure, heteromultimer composed of HisG and HisZ subunits.

It is found in the cytoplasm. It catalyses the reaction 1-(5-phospho-beta-D-ribosyl)-ATP + diphosphate = 5-phospho-alpha-D-ribose 1-diphosphate + ATP. It participates in amino-acid biosynthesis; L-histidine biosynthesis; L-histidine from 5-phospho-alpha-D-ribose 1-diphosphate: step 1/9. Its function is as follows. Catalyzes the condensation of ATP and 5-phosphoribose 1-diphosphate to form N'-(5'-phosphoribosyl)-ATP (PR-ATP). Has a crucial role in the pathway because the rate of histidine biosynthesis seems to be controlled primarily by regulation of HisG enzymatic activity. The chain is ATP phosphoribosyltransferase from Pseudomonas putida (strain ATCC 47054 / DSM 6125 / CFBP 8728 / NCIMB 11950 / KT2440).